The primary structure comprises 1501 residues: Neither inactivation nor afterpotential protein C (1501 aa).

The 267-residue stretch at 16-282 folds into the Protein kinase domain; sequence FEIYEEIAQG…MVEMVEHPFL (267 aa). ATP is bound by residues 22-30 and K45; that span reads IAQGVNAKV. The Proton acceptor role is filled by D145. S183 bears the Phosphoserine mark. Residues 332 to 1037 form the Myosin motor domain; it reads MYPEDLAALE…FLARLYELQV (706 aa). Residues 913–934 form an actin-binding region; it reads LTLLKMLSQNANLGVHFVRCIR. 2 consecutive IQ domains span residues 1036–1065 and 1072–1101; these read QVKKVIKVQSMMRALLARKRVKGGKVFKLG and HDVAASKIQKAFRGFRDRVRLPPLVNEKSG. Residues 1043 to 1271 form an interaction with rtp region; the sequence is VQSMMRALLA…RMGESDNIYN (229 aa). A non alpha-helical, C-terminal domain region spans residues 1066 to 1501; the sequence is KKGPEHHDVA…ITLSGYAVDI (436 aa). 2 disordered regions span residues 1308–1364 and 1390–1473; these read NWGV…DPVR and KTNY…EDSN. Positions 1326–1335 are enriched in pro residues; sequence APPPPPPPMP. The span at 1336–1358 shows a compositional bias: low complexity; it reads SSNYYRNNPNQQQRNYQQRSSYP. A compositionally biased stretch (basic and acidic residues) spans 1405–1414; it reads NNRRGSDSGD. The span at 1449–1463 shows a compositional bias: polar residues; sequence FGQQQRAPTLRQSPA.

In the C-terminal section; belongs to the TRAFAC class myosin-kinesin ATPase superfamily. Myosin family. The protein in the N-terminal section; belongs to the protein kinase superfamily. Ser/Thr protein kinase family. Interacts with rtp. As to expression, expressed in the phototransducing compartment of photoreceptor cells, the rhabdomeres (at protein level).

It localises to the cytoplasm. The protein localises to the cytoskeleton. It is found in the nucleus. Its subcellular location is the membrane. The protein resides in the cell projection. It localises to the rhabdomere membrane. The enzyme catalyses L-seryl-[protein] + ATP = O-phospho-L-seryl-[protein] + ADP + H(+). It carries out the reaction L-threonyl-[protein] + ATP = O-phospho-L-threonyl-[protein] + ADP + H(+). Functionally, required for photoreceptor cell function. The ninaC proteins combines putative serine/threonine-protein kinase and myosin activities. Essential for the expression and stability of the rtp protein in the photoreceptors. The rtp/ninaC complex is required for stability of inad and inac and the normal termination of phototransduction in the retina. This is Neither inactivation nor afterpotential protein C (ninaC) from Drosophila melanogaster (Fruit fly).